The chain runs to 389 residues: COP9 signalosome complex subunit 11 (389 aa).

Residues 143–312 enclose the PCI domain; it reads QLIIDIPNLV…ILYQKFDPQM (170 aa).

In terms of assembly, component of a COP9 signalosome-like (CSN) complex.

The protein localises to the cytoplasm. It localises to the nucleus. Component of the COP9 signalosome (CSN) complex that acts as an regulator of the ubiquitin (Ubl) conjugation pathway by mediating the deneddylation of the cullin subunit of SCF-type E3 ubiquitin-protein ligase complexes The CSN complex is involved in the regulation of the mating pheromone response. PCI8 may also be involved in transcriptional and translational control. The polypeptide is COP9 signalosome complex subunit 11 (PCI8) (Kluyveromyces lactis (strain ATCC 8585 / CBS 2359 / DSM 70799 / NBRC 1267 / NRRL Y-1140 / WM37) (Yeast)).